Here is a 132-residue protein sequence, read N- to C-terminus: Large ribosomal subunit protein bL12 (132 aa).

It belongs to the bacterial ribosomal protein bL12 family. In terms of assembly, homodimer. Part of the ribosomal stalk of the 50S ribosomal subunit. Forms a multimeric L10(L12)X complex, where L10 forms an elongated spine to which 2 to 4 L12 dimers bind in a sequential fashion. Binds GTP-bound translation factors.

Its function is as follows. Forms part of the ribosomal stalk which helps the ribosome interact with GTP-bound translation factors. Is thus essential for accurate translation. In Prochlorococcus marinus (strain MIT 9211), this protein is Large ribosomal subunit protein bL12.